The sequence spans 214 residues: Large ribosomal subunit protein uL3 (214 aa).

Polar residues predominate over residues Ser-132–Ala-145. Residues Ser-132–Pro-155 are disordered. Gln-153 is modified (N5-methylglutamine).

It belongs to the universal ribosomal protein uL3 family. As to quaternary structure, part of the 50S ribosomal subunit. Forms a cluster with proteins L14 and L19. Post-translationally, methylated by PrmB.

In terms of biological role, one of the primary rRNA binding proteins, it binds directly near the 3'-end of the 23S rRNA, where it nucleates assembly of the 50S subunit. In Laribacter hongkongensis (strain HLHK9), this protein is Large ribosomal subunit protein uL3.